Consider the following 470-residue polypeptide: Dihydrolipoyl dehydrogenase (470 aa).

FAD is bound by residues 39 to 47 (EKGNLGGVC), Lys-56, and Ala-119. Cysteines 47 and 52 form a disulfide. Residues 183–187 (GGGYI), Glu-206, and 271–274 (TVGR) each bind NAD(+). Positions 314 and 322 each coordinate FAD. The active-site Proton acceptor is the His-446.

This sequence belongs to the class-I pyridine nucleotide-disulfide oxidoreductase family. In terms of assembly, homodimer. Identified in a complex with PdhC. The cofactor is FAD.

The protein resides in the cytoplasm. The catalysed reaction is N(6)-[(R)-dihydrolipoyl]-L-lysyl-[protein] + NAD(+) = N(6)-[(R)-lipoyl]-L-lysyl-[protein] + NADH + H(+). In terms of biological role, lipoamide dehydrogenase is a component of the alpha-ketoacid dehydrogenase complexes. The chain is Dihydrolipoyl dehydrogenase (pdhD) from Geobacillus stearothermophilus (Bacillus stearothermophilus).